The primary structure comprises 230 residues: Potassium/proton antiporter CemA (230 aa).

4 helical membrane-spanning segments follow: residues 7-27, 106-126, 145-165, and 181-201; these read LPSF…SFSF, IILH…SFFL, LNDS…VGFH, and LGWA…PVIL.

The protein belongs to the CemA family.

It localises to the plastid. Its subcellular location is the chloroplast inner membrane. It catalyses the reaction K(+)(in) + H(+)(out) = K(+)(out) + H(+)(in). Its function is as follows. Contributes to K(+)/H(+) antiport activity by supporting proton efflux to control proton extrusion and homeostasis in chloroplasts in a light-dependent manner to modulate photosynthesis. Prevents excessive induction of non-photochemical quenching (NPQ) under continuous-light conditions. Indirectly promotes efficient inorganic carbon uptake into chloroplasts. The polypeptide is Potassium/proton antiporter CemA (Zea mays (Maize)).